We begin with the raw amino-acid sequence, 130 residues long: Large ribosomal subunit protein bL17 (130 aa).

Belongs to the bacterial ribosomal protein bL17 family. In terms of assembly, part of the 50S ribosomal subunit. Contacts protein L32.

In Buchnera aphidicola subsp. Acyrthosiphon pisum (strain 5A), this protein is Large ribosomal subunit protein bL17.